A 242-amino-acid polypeptide reads, in one-letter code: ATP synthase subunit a (242 aa).

The next 6 helical transmembrane spans lie at 29–49 (SAAYMLLASVLALTYFYLAFS), 84–104 (FVPVIFTLFVFILFCNLFGMI), 114–134 (IIITFALAILVFLMVTIVGFV), 140–160 (FLSLFLPHGTPLWLAPLMIII), 189–209 (VIASFVVTLMIYLKFLPIPLM), and 210–230 (VILIGFEIFVAILQAYIFTIL).

This sequence belongs to the ATPase A chain family. As to quaternary structure, F-type ATPases have 2 components, CF(1) - the catalytic core - and CF(0) - the membrane proton channel. CF(1) has five subunits: alpha(3), beta(3), gamma(1), delta(1), epsilon(1). CF(0) has three main subunits: a(1), b(2) and c(9-12). The alpha and beta chains form an alternating ring which encloses part of the gamma chain. CF(1) is attached to CF(0) by a central stalk formed by the gamma and epsilon chains, while a peripheral stalk is formed by the delta and b chains.

The protein resides in the cell inner membrane. In terms of biological role, key component of the proton channel; it plays a direct role in the translocation of protons across the membrane. This is ATP synthase subunit a from Rickettsia bellii (strain RML369-C).